A 334-amino-acid polypeptide reads, in one-letter code: Glycerol-3-phosphate dehydrogenase [NAD(P)+] (334 aa).

Positions 13, 33, and 106 each coordinate NADPH. Sn-glycerol 3-phosphate is bound by residues Lys106, Gly137, and Ser139. Residue Ala141 participates in NADPH binding. Residues Lys192, Asp245, Ser255, Arg256, and Asn257 each contribute to the sn-glycerol 3-phosphate site. Lys192 (proton acceptor) is an active-site residue. Residue Arg256 participates in NADPH binding. Val280 and Glu282 together coordinate NADPH.

It belongs to the NAD-dependent glycerol-3-phosphate dehydrogenase family.

The protein resides in the cytoplasm. It catalyses the reaction sn-glycerol 3-phosphate + NAD(+) = dihydroxyacetone phosphate + NADH + H(+). The enzyme catalyses sn-glycerol 3-phosphate + NADP(+) = dihydroxyacetone phosphate + NADPH + H(+). It functions in the pathway membrane lipid metabolism; glycerophospholipid metabolism. Catalyzes the reduction of the glycolytic intermediate dihydroxyacetone phosphate (DHAP) to sn-glycerol 3-phosphate (G3P), the key precursor for phospholipid synthesis. In Chlamydia pneumoniae (Chlamydophila pneumoniae), this protein is Glycerol-3-phosphate dehydrogenase [NAD(P)+].